The primary structure comprises 368 residues: Protein RecA (368 aa).

80 to 87 (GPESSGKT) contacts ATP. Polar residues predominate over residues 344 to 353 (NPTFTATPDS). Positions 344–368 (NPTFTATPDSENADNADDEFSEEEL) are disordered. Over residues 354-368 (ENADNADDEFSEEEL) the composition is skewed to acidic residues.

Belongs to the RecA family.

Its subcellular location is the cytoplasm. Functionally, can catalyze the hydrolysis of ATP in the presence of single-stranded DNA, the ATP-dependent uptake of single-stranded DNA by duplex DNA, and the ATP-dependent hybridization of homologous single-stranded DNAs. It interacts with LexA causing its activation and leading to its autocatalytic cleavage. The polypeptide is Protein RecA (Mannheimia haemolytica (Pasteurella haemolytica)).